The primary structure comprises 216 residues: Flagellar transcriptional regulator FlhC (216 aa).

Zn(2+)-binding residues include C137, C140, C157, and C160.

This sequence belongs to the FlhC family. In terms of assembly, heterohexamer composed of two FlhC and four FlhD subunits. Each FlhC binds a FlhD dimer, forming a heterotrimer, and a hexamer assembles by dimerization of two heterotrimers. It depends on Zn(2+) as a cofactor.

It localises to the cytoplasm. Functionally, functions in complex with FlhD as a master transcriptional regulator that regulates transcription of several flagellar and non-flagellar operons by binding to their promoter region. Activates expression of class 2 flagellar genes, including fliA, which is a flagellum-specific sigma factor that turns on the class 3 genes. Also regulates genes whose products function in a variety of physiological pathways. This is Flagellar transcriptional regulator FlhC from Paraburkholderia atlantica.